Consider the following 138-residue polypeptide: Histone H2AX (138 aa).

The segment at 1 to 23 is disordered; that stretch reads MSTTGKGGKAKGKTASSKQVSRS. The residue at position 2 (Ser2) is an N-acetylserine. An N6-acetyllysine mark is found at Lys6, Lys9, Lys11, Lys13, and Lys18. Ser123 is modified (phosphoserine). Lys124 is covalently cross-linked (Glycyl lysine isopeptide (Lys-Gly) (interchain with G-Cter in ubiquitin)). Phosphoserine is present on residues Ser125, Ser130, and Ser135. Residues 135–136 carry the [ST]-Q motif motif; that stretch reads SQ.

It belongs to the histone H2A family. The nucleosome is a histone octamer containing two molecules each of H2A, H2B, H3 and H4 assembled in one H3-H4 heterotetramer and two H2A-H2B heterodimers. The octamer wraps approximately 147 bp of DNA. Post-translationally, monoubiquitination of Lys-124 gives a specific tag for epigenetic transcriptional repression. Phosphorylated to form H2AX134ph (gamma-H2AX) in response to DNA double-strand breaks (DSBs) generated by exogenous genotoxic agents in both the mitotic MIC and the amitotic MAC. Gamma-H2AX is also found when programmed DNA rearrangements occur, namely homologous recombination in the MIC during prophase of meiosis, and chromosome fragmentation and DNA elimination in developing MACs. Gamma-H2AX is important to recover from exogenous DNA damage and to repair breaks associated with normal micronuclear meiosis and mitosis and macronuclear amitotic division. In terms of processing, acetylation occurs almost exclusively in the MAC.

It localises to the nucleus. The protein localises to the chromosome. Functionally, core component of nucleosome which plays a central role in DNA double strand break (DSB) repair. Nucleosomes wrap and compact DNA into chromatin, limiting DNA accessibility to the cellular machineries which require DNA as a template. Histones thereby play a central role in transcription regulation, DNA repair, DNA replication and chromosomal stability. DNA accessibility is regulated via a complex set of post-translational modifications of histones, also called histone code, and nucleosome remodeling. The polypeptide is Histone H2AX (HTA1) (Tetrahymena thermophila (strain SB210)).